The sequence spans 424 residues: Otefin (424 aa).

The 30-residue stretch at 1–30 folds into the LEM domain; sequence MADVDDFDSLSNAELRAKMLAQGLPNIPVT. A required for binding to Med and germline stem cell maintenance region spans residues 1–50; it reads MADVDDFDSLSNAELRAKMLAQGLPNIPVTDSSRKVLVKRLRASIGGQAS. A disordered region spans residues 42–186; it reads RASIGGQASP…SSKRADREEN (145 aa). Phosphoserine is present on residues Ser-44, Ser-50, and Ser-54. Thr-63 carries the post-translational modification Phosphothreonine. The segment covering 65–80 has biased composition (low complexity); sequence APAPGAPSAPAAASTP. A Nuclear localization signal motif is present at residues 92–99; sequence ATKARRTI. Basic and acidic residues predominate over residues 103-133; sequence EAKEPVRRLPEEAIRRRPDEADRLRSEEPVA. A Phosphoserine modification is found at Ser-152. Basic and acidic residues predominate over residues 157–170; sequence SERKVVEPLRKPET. 2 positions are modified to phosphoserine: Ser-192 and Ser-198. Residues 259–278 form a disordered region; sequence PSVPSARAQTTSSTRSYDYA. The segment covering 262–274 has biased composition (low complexity); that stretch reads PSARAQTTSSTRS. Residues 271 to 400 are required for binding to Med; sequence STRSYDYASN…NRWLNSLEQK (130 aa). A Phosphoserine modification is found at Ser-321. At Thr-324 the chain carries Phosphothreonine. A Phosphoserine modification is found at Ser-326. Position 358 is a phosphothreonine (Thr-358). A phosphoserine mark is found at Ser-378 and Ser-385. An essential for nuclear membrane localization and germline stem cell maintenance region spans residues 400-424; the sequence is KYHIKSKLFIVLLVLLLIGVYYIFY. The essential for nuclear membrane localization stretch occupies residues 406–424; the sequence is KLFIVLLVLLLIGVYYIFY.

As to quaternary structure, interacts with Med. Interacts with Lam. Interacts with aurA, alphaTub84B, gammaTub23C and gammaTub37C. Interacts with Nemp. Post-translationally, phosphorylation at Thr-63 by aurA may be required for exit from mitosis. May be phosphorylated by Cdk1 and Pka-C1. As to expression, expressed in all cell types of the germarium and testis. Expressed in nurse cells, follicle cells and oocytes.

It localises to the nucleus inner membrane. It is found in the nucleus. The protein localises to the nucleoplasm. Its subcellular location is the cytoplasm. The protein resides in the chromosome. It localises to the cytoskeleton. It is found in the spindle pole. The protein localises to the microtubule organizing center. Its subcellular location is the centrosome. Functionally, inner nuclear membrane protein. Involved in the attachment of membrane vesicles to chromatin during nuclear assembly, and is probably required for centrosome maturation and cell cycle progression during mitosis. Essential for differentiation of certain tissues and the maintenance of progenitor cell populations. Required for the differentiation and maintenance of male and female germline stem cells (GSCs), as well as the maintenance of somatic cells in the GSC niche. This role is likely to be independent of the BMP (Dpp) pathway that negatively regulates bam transcription during GSC differentiation. During development, plays essential and redundant functions with the other LEM domain proteins; bocks and MAN1. Also has a redundant but important role with bocks during larval development. The sequence is that of Otefin from Drosophila melanogaster (Fruit fly).